The primary structure comprises 107 residues: uncharacterized protein (107 aa).

The stretch at phenylalanine 34–tyrosine 107 forms a coiled coil.

This is an uncharacterized protein from Dictyostelium discoideum (Social amoeba).